A 240-amino-acid chain; its full sequence is ATP synthase subunit a (240 aa).

6 helical membrane passes run 41 to 61 (WLVM…LEII), 92 to 112 (FFPM…IGLI), 121 to 141 (SINT…VIGF), 152 to 172 (FIGP…ISNF), 191 to 211 (VLLG…PIMV), and 212 to 232 (LGVL…VVYF).

This sequence belongs to the ATPase A chain family. In terms of assembly, F-type ATPases have 2 components, CF(1) - the catalytic core - and CF(0) - the membrane proton channel. CF(1) has five subunits: alpha(3), beta(3), gamma(1), delta(1), epsilon(1). CF(0) has three main subunits: a(1), b(2) and c(9-12). The alpha and beta chains form an alternating ring which encloses part of the gamma chain. CF(1) is attached to CF(0) by a central stalk formed by the gamma and epsilon chains, while a peripheral stalk is formed by the delta and b chains.

The protein resides in the cell inner membrane. In terms of biological role, key component of the proton channel; it plays a direct role in the translocation of protons across the membrane. This is ATP synthase subunit a from Desulfotalea psychrophila (strain LSv54 / DSM 12343).